Here is a 443-residue protein sequence, read N- to C-terminus: Serine--tRNA ligase (443 aa).

Residue 246 to 248 (TAE) participates in L-serine binding. 277 to 279 (RAE) provides a ligand contact to ATP. Glu-300 is a binding site for L-serine. 367 to 370 (EISS) serves as a coordination point for ATP. Ser-402 lines the L-serine pocket.

Belongs to the class-II aminoacyl-tRNA synthetase family. Type-1 seryl-tRNA synthetase subfamily. In terms of assembly, homodimer. The tRNA molecule binds across the dimer.

The protein resides in the cytoplasm. The enzyme catalyses tRNA(Ser) + L-serine + ATP = L-seryl-tRNA(Ser) + AMP + diphosphate + H(+). The catalysed reaction is tRNA(Sec) + L-serine + ATP = L-seryl-tRNA(Sec) + AMP + diphosphate + H(+). The protein operates within aminoacyl-tRNA biosynthesis; selenocysteinyl-tRNA(Sec) biosynthesis; L-seryl-tRNA(Sec) from L-serine and tRNA(Sec): step 1/1. Catalyzes the attachment of serine to tRNA(Ser). Is also able to aminoacylate tRNA(Sec) with serine, to form the misacylated tRNA L-seryl-tRNA(Sec), which will be further converted into selenocysteinyl-tRNA(Sec). This chain is Serine--tRNA ligase, found in Bradyrhizobium diazoefficiens (strain JCM 10833 / BCRC 13528 / IAM 13628 / NBRC 14792 / USDA 110).